We begin with the raw amino-acid sequence, 210 residues long: FMN-dependent NADH:quinone oxidoreductase 8 (210 aa).

FMN contacts are provided by residues S10 and 16-18 (SIS).

The protein belongs to the azoreductase type 1 family. As to quaternary structure, homodimer. Requires FMN as cofactor.

The catalysed reaction is 2 a quinone + NADH + H(+) = 2 a 1,4-benzosemiquinone + NAD(+). It carries out the reaction N,N-dimethyl-1,4-phenylenediamine + anthranilate + 2 NAD(+) = 2-(4-dimethylaminophenyl)diazenylbenzoate + 2 NADH + 2 H(+). In terms of biological role, quinone reductase that provides resistance to thiol-specific stress caused by electrophilic quinones. Its function is as follows. Also exhibits azoreductase activity. Catalyzes the reductive cleavage of the azo bond in aromatic azo compounds to the corresponding amines. The chain is FMN-dependent NADH:quinone oxidoreductase 8 from Burkholderia lata (strain ATCC 17760 / DSM 23089 / LMG 22485 / NCIMB 9086 / R18194 / 383).